A 382-amino-acid chain; its full sequence is 1-deoxy-D-xylulose 5-phosphate reductoisomerase (382 aa).

Residues threonine 10, glycine 11, serine 12, isoleucine 13, glycine 36, and asparagine 122 each coordinate NADPH. Residue lysine 123 participates in 1-deoxy-D-xylulose 5-phosphate binding. Glutamate 124 provides a ligand contact to NADPH. A Mn(2+)-binding site is contributed by aspartate 148. Residues serine 149, glutamate 150, serine 174, and histidine 197 each contribute to the 1-deoxy-D-xylulose 5-phosphate site. Glutamate 150 is a binding site for Mn(2+). Glycine 203 contributes to the NADPH binding site. Positions 210, 215, 216, and 219 each coordinate 1-deoxy-D-xylulose 5-phosphate. Glutamate 219 contributes to the Mn(2+) binding site.

This sequence belongs to the DXR family. Mg(2+) is required as a cofactor. Requires Mn(2+) as cofactor.

The catalysed reaction is 2-C-methyl-D-erythritol 4-phosphate + NADP(+) = 1-deoxy-D-xylulose 5-phosphate + NADPH + H(+). Its pathway is isoprenoid biosynthesis; isopentenyl diphosphate biosynthesis via DXP pathway; isopentenyl diphosphate from 1-deoxy-D-xylulose 5-phosphate: step 1/6. Functionally, catalyzes the NADPH-dependent rearrangement and reduction of 1-deoxy-D-xylulose-5-phosphate (DXP) to 2-C-methyl-D-erythritol 4-phosphate (MEP). In Chlorobium chlorochromatii (strain CaD3), this protein is 1-deoxy-D-xylulose 5-phosphate reductoisomerase.